Here is a 158-residue protein sequence, read N- to C-terminus: Snaclec flavocetin-A subunit alpha (158 aa).

Residues 1–23 (MERLIFVSFGLLVVILSLSGTGA) form the signal peptide. 3 disulfide bridges follow: cysteine 27–cysteine 38, cysteine 55–cysteine 152, and cysteine 127–cysteine 144. Positions 34–153 (YDRYCYQAFS…CGTENPFVCK (120 aa)) constitute a C-type lectin domain.

It belongs to the snaclec family. Tetramer of heterodimers of alpha and beta subunits (alphabeta)(4); disulfide-linked. In terms of tissue distribution, expressed by the venom gland.

The protein localises to the secreted. Its function is as follows. Strong platelet aggregation inhibitor. Binds specifically to platelet glycoprotein Ibalpha (GP1BA) with high affinity and inhibits vWF-dependent platelet aggregation. Has also been observed to induce small agglutinates in washed platelets by binding to GPIb. In Protobothrops flavoviridis (Habu), this protein is Snaclec flavocetin-A subunit alpha.